The primary structure comprises 426 residues: MYPYSESDAQRLHQEAPKASQLAHSEVDLRSDFSRDRARVLHSAALRRLADKTQVVGPRDGDTPRTRLTHSLEVAQIARGMGSGLGLDPELSELAGLCHDIGHPPYGHNGEKALNEVAAACGGFEGNAQTLRILTRLEPKVVSADGTSFGLNLTRAALDAACKYPWTKTSPDGTINRKYGAYDEDAHILEWVRRGHTDLRPSLEAQTMDFSDDIAYSVHDVEDGIVAGRIDLKVLWDLVELAALAQKGARAFGGDPEELIEGAATLRELPVVAAAADFDASLSSYAALKAMTSELVGRYVGSTIAATRAAARLGEYEFGRMHGELVIRPEADREVRLLKTLAVLYVMDDPGHLARQDRQRDRIFRVFDYLTLGAPGSLDPMYRQWFLEADDDAGRARVVVDQIASMTESRLERLARNASGISGFLG.

A disordered region spans residues 1–23 (MYPYSESDAQRLHQEAPKASQLA). Residues 67-217 (RLTHSLEVAQ…MDFSDDIAYS (151 aa)) form the HD domain.

It belongs to the dGTPase family. Type 2 subfamily.

This Corynebacterium efficiens (strain DSM 44549 / YS-314 / AJ 12310 / JCM 11189 / NBRC 100395) protein is Deoxyguanosinetriphosphate triphosphohydrolase-like protein.